Consider the following 842-residue polypeptide: Leucine--tRNA ligase (842 aa).

A 'HIGH' region motif is present at residues 44–55; that stretch reads PYPSANGLHVGH. The 'KMSKS' region motif lies at 619–623; it reads KMSKS. K622 contributes to the ATP binding site.

It belongs to the class-I aminoacyl-tRNA synthetase family.

It localises to the cytoplasm. The enzyme catalyses tRNA(Leu) + L-leucine + ATP = L-leucyl-tRNA(Leu) + AMP + diphosphate. This Borrelia hermsii (strain HS1 / DAH) protein is Leucine--tRNA ligase.